We begin with the raw amino-acid sequence, 349 residues long: 3-dehydroquinate synthase (349 aa).

Residues 63-68 (DGEEYK), 97-101 (GVIGD), 121-122 (TT), Lys-134, Lys-143, and 161-164 (FLTT) contribute to the NAD(+) site. Residues Glu-176, His-235, and His-252 each coordinate Zn(2+).

It belongs to the sugar phosphate cyclases superfamily. Dehydroquinate synthase family. It depends on Co(2+) as a cofactor. Zn(2+) is required as a cofactor. Requires NAD(+) as cofactor.

It is found in the cytoplasm. The catalysed reaction is 7-phospho-2-dehydro-3-deoxy-D-arabino-heptonate = 3-dehydroquinate + phosphate. It functions in the pathway metabolic intermediate biosynthesis; chorismate biosynthesis; chorismate from D-erythrose 4-phosphate and phosphoenolpyruvate: step 2/7. In terms of biological role, catalyzes the conversion of 3-deoxy-D-arabino-heptulosonate 7-phosphate (DAHP) to dehydroquinate (DHQ). This Sulfurimonas denitrificans (strain ATCC 33889 / DSM 1251) (Thiomicrospira denitrificans (strain ATCC 33889 / DSM 1251)) protein is 3-dehydroquinate synthase.